Reading from the N-terminus, the 254-residue chain is 5-oxoprolinase subunit A (254 aa).

The protein belongs to the LamB/PxpA family. As to quaternary structure, forms a complex composed of PxpA, PxpB and PxpC.

It catalyses the reaction 5-oxo-L-proline + ATP + 2 H2O = L-glutamate + ADP + phosphate + H(+). Functionally, catalyzes the cleavage of 5-oxoproline to form L-glutamate coupled to the hydrolysis of ATP to ADP and inorganic phosphate. This Burkholderia orbicola (strain MC0-3) protein is 5-oxoprolinase subunit A.